Reading from the N-terminus, the 248-residue chain is Proteasome subunit alpha type-1 (248 aa).

It belongs to the peptidase T1A family. As to quaternary structure, the 26S proteasome consists of a 20S proteasome core and two 19S regulatory subunits. The 20S proteasome core is composed of 28 subunits that are arranged in four stacked rings, resulting in a barrel-shaped structure. The two end rings are each formed by seven alpha subunits, and the two central rings are each formed by seven beta subunits. The catalytic chamber with the active sites is on the inside of the barrel.

It is found in the cytoplasm. It localises to the nucleus. In terms of biological role, the proteasome is a multicatalytic proteinase complex which is characterized by its ability to cleave peptides with Arg, Phe, Tyr, Leu, and Glu adjacent to the leaving group at neutral or slightly basic pH. The proteasome has an ATP-dependent proteolytic activity. In Dictyostelium discoideum (Social amoeba), this protein is Proteasome subunit alpha type-1 (psmA1).